The following is a 412-amino-acid chain: POU domain, class 4, transcription factor 2 (412 aa).

The segment at 29–96 (LHSASPGSSA…SEAMRRACLP (68 aa)) is disordered. Positions 31-53 (SASPGSSAPAAPSASSPSSSSNA) are enriched in low complexity. Composition is skewed to gly residues over residues 54–70 (GSGG…GGGR) and 78–87 (GSGGGGGGGS). The tract at residues 94 to 240 (CLPTPPSNIF…MHQAALSMAH (147 aa)) is required for transcriptional activation. The POU-IV box signature appears at 113-122 (RAEALAAVDI). The disordered stretch occupies residues 123-191 (VSQSKSHHHH…HHHHQPHQAL (69 aa)). Over residues 127-138 (KSHHHHPPHHSP) the composition is skewed to basic residues. Residues 152 to 169 (PCTSAASSSSVPISHPSA) are compositionally biased toward low complexity. Over residues 173-187 (THHHHHHHHHHHHQP) the composition is skewed to basic residues. The Nuclear speckle targeting signal motif lies at 174-188 (HHHHHHHHHHHHQPH). A required for DNA-binding and transcriptional repression region spans residues 241-412 (AHGLPSHMGC…QKRMKYSAGI (172 aa)). Residues 253-330 (DVDADPRDLE…ILQAWLEEAE (78 aa)) form the POU-specific domain. The segment at residues 348–407 (KKRKRTSIAAPEKRSLEAYFAIQPRPSSEKIAAIAEKLDLKKNVVRVWFCNQRQKQKRMK) is a DNA-binding region (homeobox).

It belongs to the POU transcription factor family. Class-4 subfamily. As to quaternary structure, interacts with POU4F1; this interaction inhibits both POU4F1 DNA-binding and transcriptional activities. Interacts (C-terminus) with ESR1 (via DNA-binding domain); this interaction increases the estrogen receptor ESR1 transcriptional activity in a DNA- and ligand 17-beta-estradiol-independent manner. Interacts (via C-terminus) with TP53 (via N-terminus). Interacts with DLX1 (via homeobox DNA-binding domain); this interaction suppresses DLX1-mediated transcriptional activity in postnatal retina enhancing retinal ganglion cell (RGC) differentiation. Interacts with DLX2 (via homeobox DNA-binding domain); this interaction enhances RGC differentiation. Interacts (via C-terminus) with ISL1 (via C-terminus). Interacts with ISL2. Interacts with LHX2. Expressed in the heart, brain and spinal cord. Expressed in cardiomyocytes (at protein level). Expressed in brain and spinal cord. Expressed in dorsal root ganglion (RGD) neurons.

The protein localises to the nucleus. Its subcellular location is the nucleus speckle. It is found in the cytoplasm. In terms of biological role, tissue-specific DNA-binding transcription factor involved in the development and differentiation of target cells. Functions either as activator or repressor modulating the rate of target gene transcription through RNA polymerase II enzyme in a promoter-dependent manner. Binds to the consensus octamer motif 5'-AT[A/T]A[T/A]T[A/T]A-3' of promoter of target genes. Plays a fundamental role in the gene regulatory network essential for retinal ganglion cell (RGC) differentiation. Binds to an octamer site to form a ternary complex with ISL1; cooperates positively with ISL1 and ISL2 to potentiate transcriptional activation of RGC target genes being involved in RGC fate commitment in the developing retina and RGC axon formation and pathfinding. Inhibits DLX1 and DLX2 transcriptional activities preventing DLX1- and DLX2-mediated ability to promote amacrine cell fate specification. In cooperation with TP53 potentiates transcriptional activation of BAX promoter activity increasing neuronal cell apoptosis. Negatively regulates BAX promoter activity in the absence of TP53. Acts as a transcriptional coactivator via its interaction with the transcription factor ESR1 by enhancing its effect on estrogen response element (ERE)-containing promoter. Antagonizes the transcriptional stimulatory activity of POU4F1 by preventing its binding to an octamer motif. Involved in TNFSF11-mediated terminal osteoclast differentiation. The polypeptide is POU domain, class 4, transcription factor 2 (Rattus norvegicus (Rat)).